We begin with the raw amino-acid sequence, 87 residues long: U3-theraphotoxin-Hhn1a 2 (87 aa).

The first 24 residues, 1–24, serve as a signal peptide directing secretion; that stretch reads MVNMKASMFLTFAGLVLLFVVCYA. The propeptide occupies 25–52; the sequence is SESEEKEFPKEMLSSIFAVDDDFKQEER. 3 cysteine pairs are disulfide-bonded: Cys54–Cys67, Cys61–Cys72, and Cys66–Cys79.

The protein belongs to the neurotoxin 10 (Hwtx-1) family. 51 (Hntx-8) subfamily. Hntx-8 sub-subfamily. Expressed by the venom gland.

Its subcellular location is the secreted. Ion channel inhibitor. The polypeptide is U3-theraphotoxin-Hhn1a 2 (Cyriopagopus hainanus (Chinese bird spider)).